We begin with the raw amino-acid sequence, 878 residues long: Alanine--tRNA ligase (878 aa).

Zn(2+)-binding residues include His-567, His-571, Cys-668, and His-672.

Belongs to the class-II aminoacyl-tRNA synthetase family. The cofactor is Zn(2+).

Its subcellular location is the cytoplasm. It catalyses the reaction tRNA(Ala) + L-alanine + ATP = L-alanyl-tRNA(Ala) + AMP + diphosphate. Its function is as follows. Catalyzes the attachment of alanine to tRNA(Ala) in a two-step reaction: alanine is first activated by ATP to form Ala-AMP and then transferred to the acceptor end of tRNA(Ala). Also edits incorrectly charged Ser-tRNA(Ala) and Gly-tRNA(Ala) via its editing domain. This chain is Alanine--tRNA ligase, found in Magnetococcus marinus (strain ATCC BAA-1437 / JCM 17883 / MC-1).